The sequence spans 806 residues: MASGGESKNDDLSTAILKQKNRPNRLIVDESINEDNSVVSLSQAKMDELQLFRGDTVLLKGKKRRETVCIVLSDDTCSDEKVRMNRVVRNNLRVRLGDVISIQPCPDVKYGKRIHVLPIDDTVEGITGNLFEVYLKPYFLEAYRPIRKGDIFLVRGGMRAVEFKVVETDPSPYCIVAPDTVIHCEGEPIKREDEEESLNEVGYDDIGGVRKQLAQIKEMVELPLRHPALFKAIGVKPPRGILLYGPPGTGKTLIARAVANETGAFFFLINGPEIMSKLAGESESNLRKAFEEAEKNAPAIIFIDELDAIAPKREKTHGEVERRIVSQLLTLMDGLKQRAHVIVMAATNRPNSIDPALRRFGRFDREVDIGIPDATGRLEILQIHTKNMKLADDVDLEQVANETHGHVGADLAALCSEAALQAIRKKMDLIDLEDETIDAEVMNSLAVTMDDFRWALSQSNPSALRETVVEVPNITWEDIGGLDDVKRELQELVQYPVEHPDKFLKFGMTPSKGVLFYGPPGCGKTLLAKAIANECQANFISIKGPELLTMWFGESEANVREIFDKARQAAPCVLFFDELDSIAKARGGNVGDGGGAADRVINQILTEMDGMSSKKNVFIIGATNRPDIIDPAILRPGRLDQLIYIPLPDEKSRIAILKANLRKSPISKDVDLDFLAKMTNGFSGADLTEICQRACKLAIRESIENEIRRERERQTNPSAMEVEEDDPVPEIRKDHFEEAMRFARRSVSDNDIRKYEMFAQTLQQSRGFGSFRFPSSNQGGSGPSQGSSGGGGGNVFNEDNDDDLYG.

Serine 3 is modified (phosphoserine). ATP-binding positions include 247-253 (PGTGKTL), asparagine 348, histidine 384, and 521-526 (GCGKTL). 2 disordered regions span residues 708-727 (RRER…EDDP) and 768-806 (FGSF…DLYG). Low complexity predominate over residues 768–778 (FGSFRFPSSNQ). Residues 779 to 794 (GGSGPSQGSSGGGGGN) show a composition bias toward gly residues.

It belongs to the AAA ATPase family. In terms of assembly, homohexamer.

The protein localises to the cytoplasm. It localises to the cytosol. Its subcellular location is the endoplasmic reticulum. The protein resides in the nucleus. It carries out the reaction ATP + H2O = ADP + phosphate + H(+). Necessary for the fragmentation of Golgi stacks during mitosis and for their reassembly after mitosis. Involved in the formation of the nuclear envelope, and of the transitional endoplasmic reticulum (tER). The transfer of membranes from the endoplasmic reticulum to the Golgi apparatus occurs via 50-70 nm transition vesicles which derive from part-rough, part-smooth transitional elements of the endoplasmic reticulum (tER). Vesicle budding from the tER is an ATP-dependent process. Also involved in DNA damage response: recruited to double-strand breaks (DSBs) sites and promotes the recruitment of tp53bp1 at DNA damage sites. Together with sprtn metalloprotease, involved in the repair of covalent DNA-protein cross-links (DPCs) during DNA synthesis. Involved in interstrand cross-link repair in response to replication stress by mediating unloading of the ubiquitinated CMG helicase complex. Enhances cell cycle progression and inhibits apoptosis at low temperatures. Essential for the maturation of ubiquitin-containing autophagosomes and the clearance of ubiquitinated protein by autophagy. Acts as a negative regulator of type I interferon production by promoting ubiquitination of RIGI. May play a role in the ubiquitin-dependent sorting of membrane proteins to lysosomes where they undergo degradation. May more particularly play a role in caveolins sorting in cells. By controlling the steady-state expression of the IGF1R receptor, indirectly regulates the insulin-like growth factor receptor signaling pathway. In Danio rerio (Zebrafish), this protein is Transitional endoplasmic reticulum ATPase.